We begin with the raw amino-acid sequence, 872 residues long: Oxidation resistance protein 1 (872 aa).

Positions 1–86 (MSVTNLSWLK…QKKTLDKKDG (86 aa)) are disordered. Positions 63-86 (RRSELKRFYTIDTGQKKTLDKKDG) are enriched in basic and acidic residues. Ser-90 carries the phosphoserine modification. The 44-residue stretch at 98-141 (VKYTVESRDSLNSIALKFDTTPNELVQLNKLFSRAVVTGQVLYV) folds into the LysM domain. Thr-118 is modified (phosphothreonine). Low complexity predominate over residues 150–168 (VESSPSLSPISPLSPTSSE). The disordered stretch occupies residues 150–187 (VESSPSLSPISPLSPTSSEAELEKTTTPDVVHPKEPTP). The span at 170-184 (ELEKTTTPDVVHPKE) shows a compositional bias: basic and acidic residues. Residues Ser-201, Ser-202, and Ser-204 each carry the phosphoserine modification. One can recognise a GRAM domain in the interval 212 to 268 (EKFLKINCRYITSSKGTVSGVLLVTPNNIMFDPHKTDPLVQENGCEEYGIMCPMEEV). 3 positions are modified to phosphoserine: Ser-294, Ser-334, and Ser-336. The disordered stretch occupies residues 314 to 338 (SRIRDAANDSASTAPRSTEESLSED). Phosphothreonine is present on Thr-341. A phosphoserine mark is found at Ser-346 and Ser-496. Residues 549–576 (RRHRLHKFLCLRVRKPMRKTFVSQASAT) form a mediates oxidative antimutator activity region. The TLDc domain occupies 711-872 (HLLLPDQIIK…IQDIEIWAFK (162 aa)).

It belongs to the OXR1 family.

It localises to the mitochondrion. Functionally, may be involved in protection from oxidative damage. The polypeptide is Oxidation resistance protein 1 (OXR1) (Bos taurus (Bovine)).